Consider the following 2207-residue polypeptide: Genome polyprotein (2207 aa).

Gly-2 carries the N-myristoyl glycine; by host lipid modification. Residues 2 to 1518 (GAQVSSQKVG…NINRAMTILQ (1517 aa)) lie on the Cytoplasmic side of the membrane. The interval 579 to 599 (GLGDLIEGVVEGVTRNALTPL) is amphipathic alpha-helix. The span at 597 to 613 (TPLTPANNLPDTQSSGP) shows a compositional bias: polar residues. Disordered stretches follow at residues 597–620 (TPLT…KETP) and 628–647 (GATN…VIQK). Residues His-899 and Asp-917 each act as for protease 2A activity in the active site. Zn(2+)-binding residues include Cys-934 and Cys-936. The active-site For protease 2A activity is Cys-988. Cys-994 and His-996 together coordinate Zn(2+). The segment at 1126 to 1198 (GDSWLKKFTE…HQSCPSQEHQ (73 aa)) is membrane-binding. The interval 1126–1264 (GDSWLKKFTE…SPGTGKSVAT (139 aa)) is oligomerization. The interval 1147-1151 (SNKIS) is RNA-binding. The region spanning 1230–1386 (EHTINNYVQF…SEYSRDGKLN (157 aa)) is the SF3 helicase domain. 1254 to 1261 (GSPGTGKS) is a binding site for ATP. Zn(2+)-binding residues include Cys-1394, Cys-1397, Cys-1406, and Cys-1411. The segment at 1394–1411 (CKNCHHPANFKRCCPLVC) adopts a C4-type zinc-finger fold. The interval 1438 to 1445 (ERNRRSSI) is RNA-binding. The tract at residues 1449–1454 (MEALFQ) is oligomerization. Residues 1519 to 1534 (AVTTFAAVAGVVYVMY) lie within the membrane without spanning it. Topologically, residues 1535–2207 (KLFAGHQGAY…TLYRRWLDSF (673 aa)) are cytoplasmic. O-(5'-phospho-RNA)-tyrosine is present on Tyr-1544. Residues 1564–1742 (GPGFDYAVAM…FAAALKRSYF (179 aa)) form the Peptidase C3 domain. Active-site for protease 3C activity residues include His-1603, Glu-1634, and Cys-1710. Residues 1973-2088 (EKLFAFDYTG…SYPHEVDASL (116 aa)) form the RdRp catalytic domain. Residues Asp-1979 and Asp-2074 each contribute to the Mg(2+) site.

This sequence belongs to the picornaviruses polyprotein family. As to quaternary structure, interacts with capsid protein VP1 and capsid protein VP3 to form heterotrimeric protomers. In terms of assembly, interacts with capsid protein VP0, and capsid protein VP3 to form heterotrimeric protomers. Interacts with human PVR. Five protomers subsequently associate to form pentamers which serve as building blocks for the capsid. Interacts with capsid protein VP2, capsid protein VP3 and capsid protein VP4 following cleavage of capsid protein VP0. Interacts with capsid protein VP1 and capsid protein VP3 in the mature capsid. As to quaternary structure, interacts with capsid protein VP0 and capsid protein VP1 to form heterotrimeric protomers. Five protomers subsequently associate to form pentamers which serve as building blocks for the capsid. Interacts with capsid protein VP4 in the mature capsid. Interacts with protein 2C; this interaction may be important for virion morphogenesis. In terms of assembly, interacts with capsid protein VP1 and capsid protein VP3. Homodimer. As to quaternary structure, homohexamer; forms a hexameric ring structure with 6-fold symmetry characteristic of AAA+ ATPases. Interacts (via N-terminus) with host RTN3 (via reticulon domain); this interaction is important for viral replication. Interacts with capsid protein VP3; this interaction may be important for virion morphogenesis. In terms of assembly, interacts with protein 3CD. Homodimer. Interacts with host GBF1. Interacts (via GOLD domain) with host ACBD3 (via GOLD domain); this interaction allows the formation of a viral protein 3A/ACBD3 heterotetramer with a 2:2 stoichiometry, which will stimulate the recruitment of host PI4KB in order to synthesize PI4P at the viral RNA replication sites. As to quaternary structure, interacts with RNA-directed RNA polymerase. In terms of assembly, interacts with protein 3AB and with RNA-directed RNA polymerase. Interacts with Viral protein genome-linked and with protein 3CD. The cofactor is Mg(2+). Specific enzymatic cleavages in vivo by the viral proteases yield processing intermediates and the mature proteins. In terms of processing, myristoylation is required for the formation of pentamers during virus assembly. Further assembly of 12 pentamers and a molecule of genomic RNA generates the provirion. Post-translationally, during virion maturation, immature virions are rendered infectious following cleavage of VP0 into VP4 and VP2. This maturation seems to be an autocatalytic event triggered by the presence of RNA in the capsid and it is followed by a conformational change infectious virion. Myristoylation is required during RNA encapsidation and formation of the mature virus particle. In terms of processing, VPg is uridylylated by the polymerase into VPg-pUpU. This acts as a nucleotide-peptide primer for the genomic RNA replication.

Its subcellular location is the virion. The protein localises to the host cytoplasm. It localises to the host cytoplasmic vesicle membrane. It is found in the host nucleus. It catalyses the reaction a ribonucleoside 5'-triphosphate + H2O = a ribonucleoside 5'-diphosphate + phosphate + H(+). The enzyme catalyses Selective cleavage of Tyr-|-Gly bond in the picornavirus polyprotein.. The catalysed reaction is RNA(n) + a ribonucleoside 5'-triphosphate = RNA(n+1) + diphosphate. It carries out the reaction Selective cleavage of Gln-|-Gly bond in the poliovirus polyprotein. In other picornavirus reactions Glu may be substituted for Gln, and Ser or Thr for Gly.. Its activity is regulated as follows. Replication or transcription is subject to high level of random mutations by the nucleotide analog ribavirin. Its function is as follows. Forms an icosahedral capsid of pseudo T=3 symmetry with capsid proteins VP2 and VP3. The capsid is 300 Angstroms in diameter, composed of 60 copies of each capsid protein and enclosing the viral positive strand RNA genome. Capsid protein VP1 mainly forms the vertices of the capsid. Capsid protein VP1 interacts with host cell receptor PVR to provide virion attachment to target host cells. This attachment induces virion internalization predominantly through clathrin- and caveolin-independent endocytosis in Hela cells and through caveolin-mediated endocytosis in brain microvascular endothelial cells. Tyrosine kinases are probably involved in the entry process. Virus binding to PVR induces increased junctional permeability and rearrangement of junctional proteins. Modulation of endothelial tight junctions, as well as cytolytic infection of endothelial cells themselves, may result in loss of endothelial integrity which may help the virus to reach the CNS. After binding to its receptor, the capsid undergoes conformational changes. Capsid protein VP1 N-terminus (that contains an amphipathic alpha-helix) and capsid protein VP4 are externalized. Together, they shape a pore in the host membrane through which viral genome is translocated to host cell cytoplasm. Forms an icosahedral capsid of pseudo T=3 symmetry with capsid proteins VP2 and VP3. The capsid is 300 Angstroms in diameter, composed of 60 copies of each capsid protein and enclosing the viral positive strand RNA genome. In terms of biological role, lies on the inner surface of the capsid shell. After binding to the host receptor, the capsid undergoes conformational changes. Capsid protein VP4 is released, Capsid protein VP1 N-terminus is externalized, and together, they shape a pore in the host membrane through which the viral genome is translocated into the host cell cytoplasm. Functionally, component of immature procapsids, which is cleaved into capsid proteins VP4 and VP2 after maturation. Allows the capsid to remain inactive before the maturation step. Its function is as follows. Cysteine protease that cleaves viral polyprotein and specific host proteins. It is responsible for the autocatalytic cleavage between the P1 and P2 regions, which is the first cleavage occurring in the polyprotein. Also cleaves the host translation initiation factor EIF4G1, in order to shut down the capped cellular mRNA translation. Inhibits the host nucleus-cytoplasm protein and RNA trafficking by cleaving host members of the nuclear pores including NUP98, NUP62 and NUP153. Counteracts stress granule formation probably by antagonizing its assembly or promoting its dissassembly. Cleaves and inhibits host IFIH1/MDA5, thereby inhibiting the type-I IFN production and the establishment of the antiviral state. Cleaves and inhibits host MAVS, thereby inhibiting the type-I IFN production and the establishment of the antiviral state. Plays an essential role in the virus replication cycle by acting as a viroporin. Creates a pore in the host endoplasmic reticulum and as a consequence releases Ca2+ in the cytoplasm of infected cell. In turn, high levels of cytoplasmic calcium may trigger membrane trafficking and transport of viral ER-associated proteins to viroplasms, sites of viral genome replication. In terms of biological role, induces and associates with structural rearrangements of intracellular membranes. Displays RNA-binding, nucleotide binding and NTPase activities. May play a role in virion morphogenesis and viral RNA encapsidation by interacting with the capsid protein VP3. Functionally, localizes the viral replication complex to the surface of membranous vesicles. Together with protein 3CD binds the Cis-Active RNA Element (CRE) which is involved in RNA synthesis initiation. Acts as a cofactor to stimulate the activity of 3D polymerase, maybe through a nucleid acid chaperone activity. Its function is as follows. Localizes the viral replication complex to the surface of membranous vesicles. It inhibits host cell endoplasmic reticulum-to-Golgi apparatus transport and causes the disassembly of the Golgi complex, possibly through GBF1 interaction. This would result in depletion of MHC, trail receptors and IFN receptors at the host cell surface. Plays an essential role in viral RNA replication by recruiting ACBD3 and PI4KB at the viral replication sites, thereby allowing the formation of the rearranged membranous structures where viral replication takes place. Acts as a primer for viral RNA replication and remains covalently bound to viral genomic RNA. VPg is uridylylated prior to priming replication into VPg-pUpU. The oriI viral genomic sequence may act as a template for this. The VPg-pUpU is then used as primer on the genomic RNA poly(A) by the RNA-dependent RNA polymerase to replicate the viral genome. During genome replication, the VPg-RNA linkage is removed by the host TDP2, thereby accelerating replication. During the late stage of the replication cycle, host TDP2 is excluded from sites of viral RNA synthesis and encapsidation, allowing for the generation of progeny virions. In terms of biological role, involved in the viral replication complex and viral polypeptide maturation. It exhibits protease activity with a specificity and catalytic efficiency that is different from protease 3C. Protein 3CD lacks polymerase activity. Protein 3CD binds to the 5'UTR of the viral genome. Functionally, major viral protease that mediates proteolytic processing of the polyprotein. Cleaves host EIF5B, contributing to host translation shutoff. Also cleaves host PABPC1, contributing to host translation shutoff. Cleaves host RIGI and thus contributes to the inhibition of type I interferon production. Cleaves host NLRP1, triggers host N-glycine-mediated degradation of the autoinhibitory NLRP1 N-terminal fragment. Inhibits the integrated stress response (ISR) in the infected cell by cleaving host G3BP1. Stress granule formation is thus inhibited, which allows protein synthesis and viral replication. Its function is as follows. Replicates the viral genomic RNA on the surface of intracellular membranes. May form linear arrays of subunits that propagate along a strong head-to-tail interaction called interface-I. Covalently attaches UMP to a tyrosine of VPg, which is used to prime RNA synthesis. The positive stranded RNA genome is first replicated at virus induced membranous vesicles, creating a dsRNA genomic replication form. This dsRNA is then used as template to synthesize positive stranded RNA genomes. ss(+)RNA genomes are either translated, replicated or encapsidated. The chain is Genome polyprotein from Homo sapiens (Human).